The chain runs to 485 residues: Ribulose bisphosphate carboxylase large chain (485 aa).

Residues 1-2 (MS) constitute a propeptide that is removed on maturation. Position 3 is an N-acetylproline (proline 3). Lysine 14 is subject to N6,N6,N6-trimethyllysine. Residues asparagine 123 and threonine 173 each coordinate substrate. Lysine 175 serves as the catalytic Proton acceptor. Lysine 177 lines the substrate pocket. 3 residues coordinate Mg(2+): lysine 201, aspartate 203, and glutamate 204. Lysine 201 is modified (N6-carboxylysine). Histidine 294 serves as the catalytic Proton acceptor. The substrate site is built by arginine 295, histidine 327, and serine 379.

Belongs to the RuBisCO large chain family. Type I subfamily. As to quaternary structure, heterohexadecamer of 8 large chains and 8 small chains; disulfide-linked. The disulfide link is formed within the large subunit homodimers. Mg(2+) serves as cofactor. Post-translationally, the disulfide bond which can form in the large chain dimeric partners within the hexadecamer appears to be associated with oxidative stress and protein turnover.

It is found in the plastid. It localises to the chloroplast. It catalyses the reaction 2 (2R)-3-phosphoglycerate + 2 H(+) = D-ribulose 1,5-bisphosphate + CO2 + H2O. The enzyme catalyses D-ribulose 1,5-bisphosphate + O2 = 2-phosphoglycolate + (2R)-3-phosphoglycerate + 2 H(+). RuBisCO catalyzes two reactions: the carboxylation of D-ribulose 1,5-bisphosphate, the primary event in carbon dioxide fixation, as well as the oxidative fragmentation of the pentose substrate in the photorespiration process. Both reactions occur simultaneously and in competition at the same active site. This Helianthus annuus (Common sunflower) protein is Ribulose bisphosphate carboxylase large chain.